Reading from the N-terminus, the 265-residue chain is Imidazole glycerol phosphate synthase subunit HisF (265 aa).

Residues D17 and D136 contribute to the active site.

This sequence belongs to the HisA/HisF family. In terms of assembly, heterodimer of HisH and HisF.

The protein localises to the cytoplasm. The enzyme catalyses 5-[(5-phospho-1-deoxy-D-ribulos-1-ylimino)methylamino]-1-(5-phospho-beta-D-ribosyl)imidazole-4-carboxamide + L-glutamine = D-erythro-1-(imidazol-4-yl)glycerol 3-phosphate + 5-amino-1-(5-phospho-beta-D-ribosyl)imidazole-4-carboxamide + L-glutamate + H(+). It participates in amino-acid biosynthesis; L-histidine biosynthesis; L-histidine from 5-phospho-alpha-D-ribose 1-diphosphate: step 5/9. Its function is as follows. IGPS catalyzes the conversion of PRFAR and glutamine to IGP, AICAR and glutamate. The HisF subunit catalyzes the cyclization activity that produces IGP and AICAR from PRFAR using the ammonia provided by the HisH subunit. The sequence is that of Imidazole glycerol phosphate synthase subunit HisF from Mycolicibacterium paratuberculosis (strain ATCC BAA-968 / K-10) (Mycobacterium paratuberculosis).